Reading from the N-terminus, the 144-residue chain is Maximins 4/H3 type 2 (144 aa).

The N-terminal stretch at 1 to 18 (MNFKYIIAVSFFIASAYA) is a signal peptide. A propeptide spanning residues 19-43 (RRNEKDVQSLSQRDVLEEESLREIR) is cleaved from the precursor. Asn70 carries the asparagine amide modification. Positions 74-123 (TAEDHEVMKRLEAVMRDLDSLDHPEEASERETRGFNQEEIANLFTKKEKR) are excised as a propeptide. Ile143 carries the post-translational modification Isoleucine amide.

Belongs to the bombinin family. Expressed by the skin glands.

It is found in the secreted. Maximin-4 shows antibacterial activity against both Gram-positive and Gram-negative bacteria. It also shows antimicrobial activity against the fungus C.albicans, but not against A.flavus nor P.uticale. It has little hemolytic activity. It does not possess a significant cytotoxicity against tumor cell lines. It does not possess a significant anti-HIV activity. Functionally, maximin-H3 shows antibacterial activity against both Gram-positive and Gram-negative bacteria. It also shows antimicrobial activity against the fungus C.albicans. Shows strong hemolytic activity. The polypeptide is Maximins 4/H3 type 2 (Bombina maxima (Giant fire-bellied toad)).